A 1291-amino-acid polypeptide reads, in one-letter code: 1-phosphatidylinositol 4,5-bisphosphate phosphodiesterase gamma-1 (1291 aa).

Position 2 is an N-acetylalanine (Ala2). Residues 27–142 (RSLEVGTVMT…WIRGLTWLME (116 aa)) enclose the PH 1 domain. Residues 152-187 (QIERWLRKQFYSVDRNREDRISAKDLKNMLSQVNYR) enclose the EF-hand domain. Ca(2+)-binding residues include Asp165, Asn167, Glu169, Arg171, and Asp176. The PI-PLC X-box domain maps to 320 to 464 (DTMNNPLSHY…LKRKILIKHK (145 aa)). Residues His335 and His380 contribute to the active site. The PH 2; first part domain maps to 489–523 (SIKNGILYLEDPVNHEWYPHYFVLTSSKIYYSEET). At Tyr506 the chain carries Phosphotyrosine. The interval 522 to 544 (ETSSDQGNEDEEEPKEASGSTEL) is disordered. 2 SH2 domains span residues 550-657 (WFHG…SEPV) and 668-756 (WYHA…RYPI). Tyr771 bears the Phosphotyrosine; by SYK mark. Tyr775 and Tyr783 each carry phosphotyrosine. A Phosphotyrosine; by ITK, SYK and TXK modification is found at Tyr783. Residues 791-851 (TFKCAVKALF…PSNYVEEMVS (61 aa)) enclose the SH3 domain. The PH 2; second part domain maps to 895 to 931 (FVFSISMASVAHWSLDVAADSQEELQDWVKKIREVAQ). Residues 953 to 1070 (LSELVVYCRP…GYVLQPSVMR (118 aa)) form the PI-PLC Y-box domain. Phosphotyrosine is present on Tyr977. In terms of domain architecture, C2 spans 1071–1194 (DEAFDPFDKS…TGYRAVPLKN (124 aa)). A phosphoserine mark is found at Ser1222, Ser1228, and Ser1249. Tyr1254 is modified (phosphotyrosine). Position 1264 is a phosphoserine (Ser1264). The disordered stretch occupies residues 1271-1291 (HFDGRDRRTPRRTRVNGDNRL).

Interacts with AGAP2 via its SH3 domain. Interacts (via SH2 domain) with RET. Interacts with FLT1 (tyrosine-phosphorylated). Interacts (via SH2 domain) with FGFR1, FGFR2, FGFR3 and FGFR4 (phosphorylated). Interacts with LAT (phosphorylated) upon TCR activation. Interacts (via SH3 domain) with the Pro-rich domain of TNK1. Associates with BLNK, VAV1, GRB2 and NCK1 in a B-cell antigen receptor-dependent fashion. Interacts with CBLB in activated T-cells; which inhibits phosphorylation. Interacts with SHB. Interacts (via SH3 domain) with the Arg/Gly-rich-flanked Pro-rich domains of KHDRBS1/SAM68. This interaction is selectively regulated by arginine methylation of KHDRBS1/SAM68. Interacts with INPP5D/SHIP1, THEMIS and CLNK. Interacts with AXL, FLT4 and KIT. Interacts with RALGPS1. Interacts (via the SH2 domains) with VIL1 (phosphorylated at C-terminus tyrosine phosphorylation sites). Interacts (via SH2 domain) with PDGFRA and PDGFRB (tyrosine phosphorylated). Interacts with PIP5K1C. Interacts with NTRK1 and NTRK2 (phosphorylated upon ligand-binding). Interacts with SYK; activates PLCG1. Interacts with GRB2, LAT and THEMIS upon TCR activation in thymocytes. Interacts with TESPA1; the association is increased with prolonged stimulation of the TCR and may facilitate the assembly of the LAT signalosome. Interacts (via C-terminal proline-rich domain (PRD)) with PLCG1 (via SH3 domain); this interaction leads to guanine nucleotide exchange from PlCG1 to DNM1 and enhances DNM1-dependent endocytosis. Ca(2+) serves as cofactor. In terms of processing, ubiquitinated by CBLB in activated T-cells. Tyrosine phosphorylated in response to signaling via activated FLT3, KIT and PDGFRA. Tyrosine phosphorylated by activated FGFR1, FGFR2, FGFR3 and FGFR4. Tyrosine phosphorylated by activated FLT1 and KDR. Tyrosine phosphorylated by activated PDGFRB. The receptor-mediated activation of PLCG1 involves its phosphorylation by tyrosine kinases, in response to ligation of a variety of growth factor receptors and immune system receptors. For instance, SYK phosphorylates and activates PLCG1 in response to ligation of the B-cell receptor. May be dephosphorylated by PTPRJ. Phosphorylated by ITK and TXK on Tyr-783 upon TCR activation in T-cells.

It is found in the cell projection. It localises to the lamellipodium. Its subcellular location is the ruffle. It carries out the reaction a 1,2-diacyl-sn-glycero-3-phospho-(1D-myo-inositol-4,5-bisphosphate) + H2O = 1D-myo-inositol 1,4,5-trisphosphate + a 1,2-diacyl-sn-glycerol + H(+). It catalyses the reaction a 1,2-diacyl-sn-glycero-3-phospho-(1D-myo-inositol) + H2O = 1D-myo-inositol 1-phosphate + a 1,2-diacyl-sn-glycerol + H(+). Activated by phosphorylation on tyrosine residues. Mediates the production of the second messenger molecules diacylglycerol (DAG) and inositol 1,4,5-trisphosphate (IP3). Plays an important role in the regulation of intracellular signaling cascades. Becomes activated in response to ligand-mediated activation of receptor-type tyrosine kinases, such as PDGFRA, PDGFRB, EGFR, FGFR1, FGFR2, FGFR3 and FGFR4. Plays a role in actin reorganization and cell migration. Guanine nucleotide exchange factor that binds the GTPase DNM1 and catalyzes the dissociation of GDP, allowing a GTP molecule to bind in its place, therefore enhancing DNM1-dependent endocytosis. The protein is 1-phosphatidylinositol 4,5-bisphosphate phosphodiesterase gamma-1 of Bos taurus (Bovine).